A 258-amino-acid polypeptide reads, in one-letter code: 3-deoxy-manno-octulosonate cytidylyltransferase (258 aa).

It belongs to the KdsB family.

It localises to the cytoplasm. The enzyme catalyses 3-deoxy-alpha-D-manno-oct-2-ulosonate + CTP = CMP-3-deoxy-beta-D-manno-octulosonate + diphosphate. Its pathway is nucleotide-sugar biosynthesis; CMP-3-deoxy-D-manno-octulosonate biosynthesis; CMP-3-deoxy-D-manno-octulosonate from 3-deoxy-D-manno-octulosonate and CTP: step 1/1. The protein operates within bacterial outer membrane biogenesis; lipopolysaccharide biosynthesis. In terms of biological role, activates KDO (a required 8-carbon sugar) for incorporation into bacterial lipopolysaccharide in Gram-negative bacteria. The sequence is that of 3-deoxy-manno-octulosonate cytidylyltransferase from Gemmatimonas aurantiaca (strain DSM 14586 / JCM 11422 / NBRC 100505 / T-27).